The chain runs to 1962 residues: Myosin heavy chain, muscle (1962 aa).

A Myosin N-terminal SH3-like domain is found at 33-82; sequence DSKKSCWIPDEKEGYLLGEIKATKGDIVSVGLQGGEVRDIKSEKVEKVNP. In terms of domain architecture, Myosin motor spans 86–777; it reads EKIEDMADMT…VLGQMEEFRD (692 aa). Position 179–186 (179–186) interacts with ATP; that stretch reads GESGAGKT. The interval 656–678 is actin-binding; that stretch reads LNSLMTTLRSTQPHFVRCIIPNE. The region spanning 780–809 is the IQ domain; sequence LGKIMSWMQAWARGYLSRKGFKKLQEQRVA. Residues 802–1927 adopt a coiled-coil conformation; it reads KLQEQRVALK…KFRAKGRAGS (1126 aa). Disordered regions lie at residues 1822–1862 and 1922–1962; these read ENEL…NHER and KGRA…ENEF.

It belongs to the TRAFAC class myosin-kinesin ATPase superfamily. Myosin family. In terms of assembly, muscle myosin is a hexameric protein that consists of 2 heavy chain subunits (MHC), 2 alkali light chain subunits (MLC) and 2 regulatory light chain subunits (MLC-2). As to expression, expressed in larval and adult muscles. Isoforms containing exon 9a are expressed in indirect flight muscles, exons 9a and 9b are expressed in jump muscles, exons 9b and 9c are expressed in other larval and adult muscles.

It localises to the cytoplasm. The protein localises to the myofibril. Muscle contraction. The polypeptide is Myosin heavy chain, muscle (Mhc) (Drosophila melanogaster (Fruit fly)).